A 334-amino-acid chain; its full sequence is Glucokinase-like protein PD_0680 (334 aa).

18-23 provides a ligand contact to ATP; it reads ADVGGT.

It belongs to the bacterial glucokinase family.

This Xylella fastidiosa (strain Temecula1 / ATCC 700964) protein is Glucokinase-like protein PD_0680.